The chain runs to 493 residues: Na(+)/H(+) antiporter subunit D (493 aa).

The next 14 membrane-spanning stretches (helical) occupy residues 4–23, 30–52, 72–94, 107–126, 130–149, 162–184, 204–226, 233–255, 270–292, 299–321, 325–347, 368–390, 405–427, and 448–470; these read LVILPILIPFIVGSFLILFA, RVISGFAVVGMLLVSIYLAVDVY, LVADLFATMMVILASIVGVVCLF, YYFYPFYFFLLAGVNGAFLT, FNLFVFFEVMLIASYILIVL, YVVINVFASILFIVGVAYIYSIT, VLNVIAVIFLVVFAMKGGLFPLY, YFGPPAAIAALFGGLLTKVGIYA, FTHTLILILAGLTMFFGVLGAVS, ILSYHIISQVGYMVMGLGIYTQL, GAIYYIAHHIIVKAALFLFAGAT, WLAWMFFISAISLAGIPPLSGFF, YIIAAVALAVGLLTLFSMMKIFI, and LLLPIVPLVALTIILGFAAEPIF.

This sequence belongs to the CPA3 antiporters (TC 2.A.63) subunit D family. As to quaternary structure, forms a heterooligomeric complex that consists of seven subunits: MrpA, MrpB, MrpC, MrpD, MrpE, MrpF and MrpG.

It is found in the cell membrane. In terms of biological role, mnh complex is a Na(+)Li(+)/H(+) antiporter involved in Na(+) and/or Li(+) excretion and Na(+) resistance. Na(+)/H(+) antiport consumes a transmembrane electrical potential, and is thus inferred to be electrogenic. Does not transport K(+), Ca(2+) or Mg(2+). Mrp complex is a Na(+)/H(+) antiporter involved in Na(+) excretion and Na(+) resistance. In Alkalihalophilus pseudofirmus (strain ATCC BAA-2126 / JCM 17055 / OF4) (Bacillus pseudofirmus), this protein is Na(+)/H(+) antiporter subunit D (mrpD).